A 396-amino-acid polypeptide reads, in one-letter code: RNA-binding motif protein, X chromosome (396 aa).

M1 carries the N-acetylmethionine; in Heterogeneous nuclear ribonucleoprotein G; alternate modification. V2 carries the N-acetylvaline; in Heterogeneous nuclear ribonucleoprotein G, N-terminally processed modification. An RRM domain is found at 8 to 86; sequence GKLFIGGLNL…KAIKVAQATK (79 aa). K22 participates in a covalent cross-link: Glycyl lysine isopeptide (Lys-Gly) (interchain with G-Cter in SUMO2). At K30 the chain carries N6-acetyllysine. Glycyl lysine isopeptide (Lys-Gly) (interchain with G-Cter in SUMO2) cross-links involve residues K80 and K86. The segment at 84-396 is disordered; sequence ATKPAFESGR…RGGGGGRSRY (313 aa). The residue at position 91 (S91) is a Phosphoserine. An omega-N-methylarginine mark is found at R122, R141, R162, and R170. The segment covering 148 to 162 has biased composition (pro residues); the sequence is RGPPPPRRAGPPPKR. Basic and acidic residues-rich tracts occupy residues 185 to 205 and 241 to 275; these read RGRD…RRDP and YTYR…DYAD. Positions 186–236 are necessary for the association to nascent RNAPII transcripts and nuclear localization; sequence GRDGYEGPPRRDPPPPRRDPYLGSREGGYSPRDGYSSRDYSSARDARDFAP. Gly residues predominate over residues 323–332; sequence YGGGRDGYAG. Residues 334 to 350 are compositionally biased toward basic and acidic residues; sequence RSERYSGGRDRVGRADR. S335 and S355 each carry phosphoserine. A necessary for RNA-binding region spans residues 336–396; that stretch reads ERYSGGRDRV…RGGGGGRSRY (61 aa).

As to quaternary structure, homomultimer. Found in the supraspliceosome complex. Identified in the spliceosome C complex. Forms a complex with ILF2, ILF3, YLPM1, KHDRBS1, NCOA5 and PPP1CA. Interacts with CLK2, KHDRBS2, KHDRBS3, SAFB/SAFB1, TRA2B and YTHDC1. Interacts with ERAP1; the interaction is RNA-independent. In terms of processing, O-glycosylated. Arg-185 is dimethylated, probably to asymmetric dimethylarginine.

Its subcellular location is the nucleus. In terms of biological role, RNA-binding protein that plays several role in the regulation of pre- and post-transcriptional processes. Implicated in tissue-specific regulation of gene transcription and alternative splicing of several pre-mRNAs. Binds to and stimulates transcription from the tumor suppressor TXNIP gene promoter; may thus be involved in tumor suppression. When associated with SAFB, binds to and stimulates transcription from the SREBF1 promoter. Associates with nascent mRNAs transcribed by RNA polymerase II. Component of the supraspliceosome complex that regulates pre-mRNA alternative splice site selection. Can either activate or suppress exon inclusion; acts additively with TRA2B to promote exon 7 inclusion of the survival motor neuron SMN2. Represses the splicing of MAPT/Tau exon 10. Binds preferentially to single-stranded 5'-CC[A/C]-rich RNA sequence motifs localized in a single-stranded conformation; probably binds RNA as a homodimer. Binds non-specifically to pre-mRNAs. Also plays a role in the cytoplasmic TNFR1 trafficking pathways; promotes both the IL-1-beta-mediated inducible proteolytic cleavage of TNFR1 ectodomains and the release of TNFR1 exosome-like vesicles to the extracellular compartment. This Bos taurus (Bovine) protein is RNA-binding motif protein, X chromosome (RBMX).